We begin with the raw amino-acid sequence, 137 residues long: Large ribosomal subunit protein uL16 (137 aa).

Belongs to the universal ribosomal protein uL16 family. In terms of assembly, part of the 50S ribosomal subunit.

Binds 23S rRNA and is also seen to make contacts with the A and possibly P site tRNAs. This chain is Large ribosomal subunit protein uL16, found in Mesorhizobium japonicum (strain LMG 29417 / CECT 9101 / MAFF 303099) (Mesorhizobium loti (strain MAFF 303099)).